The primary structure comprises 90 residues: Cell division topological specificity factor (90 aa).

It belongs to the MinE family.

Prevents the cell division inhibition by proteins MinC and MinD at internal division sites while permitting inhibition at polar sites. This ensures cell division at the proper site by restricting the formation of a division septum at the midpoint of the long axis of the cell. The protein is Cell division topological specificity factor of Francisella philomiragia subsp. philomiragia (strain ATCC 25017 / CCUG 19701 / FSC 153 / O#319-036).